Here is a 962-residue protein sequence, read N- to C-terminus: Oncostatin-M-specific receptor subunit beta (962 aa).

Residues 1-28 form the signal peptide; it reads MAFSVVLHQVTFLLAVLSLRTSQSKVLG. The Extracellular portion of the chain corresponds to 29 to 738; it reads EPLQLTPEIH…VTTPDVRSHM (710 aa). Asparagine 219 carries an N-linked (GlcNAc...) asparagine glycan. Fibronectin type-III domains are found at residues 237–332, 333–426, 428–527, 528–621, and 623–734; these read EPKN…VHPK, APHD…TPEA, PSEA…SGHE, EVHE…TQEL, and PSVN…TPDV. Cysteine 243 and cysteine 253 are disulfide-bonded. A glycan (N-linked (GlcNAc...) asparagine) is linked at asparagine 324. Positions 413–417 match the WSXWS motif motif; it reads WSDWM. N-linked (GlcNAc...) asparagine glycosylation is found at asparagine 492, asparagine 578, and asparagine 723. The helical transmembrane segment at 739–759 threads the bilayer; it reads LLQIILPMTLGVFLSIIVCYW. Residues 760 to 962 are Cytoplasmic-facing; that stretch reads KSQWVKEKCY…ASLKENNLTS (203 aa). A Box 1 motif motif is present at residues 768 to 776; it reads CYPDIPNPY. Residues 818–840 are disordered; sequence VGSGKLHTEDVPTKPPLVPTEKD.

The protein belongs to the type I cytokine receptor family. Type 2 subfamily. Heterodimer composed of OSMR and IL6ST (type II OSM receptor). Heterodimer with IL31RA to form the IL31 receptor. Widely expressed. Expressed at high levels in the liver, skin and spleen. In the liver it is expressed exclusively in the oval cells.

The protein resides in the membrane. Associates with IL31RA to form the IL31 receptor. Binds IL31 and activates STAT1, STAT3 and STAT5. Capable of transducing OSM-specific signaling events. The OSM/OSM-R system is pivotal in the differentiation of oval cells into hepatocytes, thereby promoting liver regeneration. This is Oncostatin-M-specific receptor subunit beta (Osmr) from Rattus norvegicus (Rat).